Here is a 1078-residue protein sequence, read N- to C-terminus: MAEDDAEKAFFQAQAMNADSVDYKAVEDQGASSDSDDYDPSKTLQDQYSASILDSKQSEIAPSSASPSDPNPPTQSIPPETDPSQPADSAYPSQTPSRADSQASVSAPASGTSVPLKTRTIGGFVVEDEDEDDAGDADYEPPAVLGVEDMNTISMNVPQQPISGNANEDTPTPDVSMDGAVQASADAKNFPNSSYTPASAAASKSDTPALLSQDMYNSRTLQSENMQDSAAATPVPDSPSTSKGRLPHDRVGILEDRIQEDPRGDIPAWLELINEHRNRNRIDSAREVYERFLTAFPFSAEQWVAYATMESELNELYRLEQIFNRTLLTIPDVQLWTVYLDYVRRRNPLTTDTTGQSRRIISSAYDLALQYVGVDKDSGSIWTDYVQFIRSGPGNVGGSGWQDQQKMDLLRKAYQKAICVPTQAVNNLWKEYDQFEMGLNKLTGRKFLQEQSPAYMTARSSYTELQNITRDLNRTTLPRLPPVLGSDGDIEFGQQVDIWKRWIKWEKGDPLVLKEEDQAAFKARVIYVYKQALMALRFLPEIWFEAAEFCFLNDMENEGNEFLKNGIEANPESCLLAFKRADRLEITSESEQDPIKRGAKVREPYDKLLNALYDLIAKARTRESQDVARLEETFAKINPDTQPSKTDDDDDDQSDSKARESMKNAQIEALRNAHAIQIGILSKTVSFAWIALMRAMRRIQGKGKPGEMPGSRQVFADARKRGRITSDVYIASALIEYHCYKDPAATKIFERGAKLFPEDENFALEYLKHLIDINDVINARAVFEMTVRKLASNPENVHKTKPIFAFLHEYESRYGDLVQVINLENRMRELFPEDPTLEQFAHRYSSPAFDPTVVRPIISPSQTRPKTAFPTEQPVSRHGTPSSRYPDASVTNSPKRPLEDFDDEMNRPRKFIRADSPLKTTQRRQLDPPKRTQQVISNQTGSQFRSQGSPAPLPRDIVYLLSIIPSASAYNAGRFSPEKLVDLIRRIDMPTSISQIPLPPSVRGLGFPEMSICLWGRLPSTTWPKTVHPCGKPTFIALSSITRVKCKRFTGWRSPYIRKPSLPPYGTYSPSLAFLISV.

Disordered stretches follow at residues 15-209 (AMNA…DTPA) and 222-251 (QSEN…HDRV). Residues 42–55 (KTLQDQYSASILDS) are compositionally biased toward polar residues. The segment covering 58 to 68 (SEIAPSSASPS) has biased composition (low complexity). Polar residues predominate over residues 82 to 115 (DPSQPADSAYPSQTPSRADSQASVSAPASGTSVP). Residues 126–139 (VEDEDEDDAGDADY) are compositionally biased toward acidic residues. 2 stretches are compositionally biased toward polar residues: residues 151-170 (NTIS…NEDT) and 190-206 (FPNS…SKSD). 6 HAT repeats span residues 280–312 (NRID…MESE), 314–345 (NELY…YVRR), 356–391 (QSRR…FIRS), 405–438 (QKMD…FEMG), 475–508 (TTLP…WEKG), and 520–552 (AFKA…FCFL). 2 disordered regions span residues 632-663 (ETFA…ESMK) and 851-950 (PTVV…QGSP). A compositionally biased stretch (polar residues) spans 879-894 (GTPSSRYPDASVTNSP). The segment covering 896-907 (RPLEDFDDEMNR) has biased composition (basic and acidic residues). Positions 931-949 (RTQQVISNQTGSQFRSQGS) are enriched in polar residues.

It is found in the nucleus. The protein localises to the cytoplasm. Component of the cleavage factor IA (CFIA) complex, which is involved in the endonucleolytic cleavage during polyadenylation-dependent pre-mRNA 3'-end formation. The protein is mRNA 3'-end-processing protein rna14 (rna14) of Aspergillus oryzae (strain ATCC 42149 / RIB 40) (Yellow koji mold).